A 153-amino-acid polypeptide reads, in one-letter code: Endoribonuclease YbeY (153 aa).

Zn(2+) contacts are provided by histidine 118, histidine 122, and histidine 128.

It belongs to the endoribonuclease YbeY family. Requires Zn(2+) as cofactor.

It localises to the cytoplasm. In terms of biological role, single strand-specific metallo-endoribonuclease involved in late-stage 70S ribosome quality control and in maturation of the 3' terminus of the 16S rRNA. The sequence is that of Endoribonuclease YbeY from Staphylococcus haemolyticus (strain JCSC1435).